We begin with the raw amino-acid sequence, 687 residues long: CWF19-like protein 2 homolog (687 aa).

A coiled-coil region spans residues F6–D51. Residues E24–A50 are compositionally biased toward basic and acidic residues. Residues E24–D281 are disordered. A compositionally biased stretch (basic residues) spans K66 to N92. The segment covering S93–F107 has biased composition (low complexity). Residues S108–E131 adopt a coiled-coil conformation. A compositionally biased stretch (basic residues) spans R114 to R125. 2 positions are modified to phosphoserine: S128 and S130. Composition is skewed to basic and acidic residues over residues V146 to W157 and F168 to E180. The stretch at K290–E325 forms a coiled coil. The interval V355 to T383 is disordered. Residues K444 to R475 adopt a coiled-coil conformation.

The protein belongs to the CWF19 family.

In Drosophila melanogaster (Fruit fly), this protein is CWF19-like protein 2 homolog.